We begin with the raw amino-acid sequence, 152 residues long: Urease accessory protein UreE (152 aa).

This sequence belongs to the UreE family.

Its subcellular location is the cytoplasm. Involved in urease metallocenter assembly. Binds nickel. Probably functions as a nickel donor during metallocenter assembly. This chain is Urease accessory protein UreE, found in Psychromonas ingrahamii (strain DSM 17664 / CCUG 51855 / 37).